The sequence spans 500 residues: Tyrosine decarboxylase 2 (500 aa).

2 consecutive repeat copies span residues glutamate 65 to glutamate 122 and valine 125 to serine 176. A 2 X approximate tandem repeats region spans residues glutamate 65–serine 176. Substrate is bound at residue serine 89. Pyridoxal 5'-phosphate contacts are provided by alanine 153 and serine 154. Residue histidine 189 coordinates substrate. Residues threonine 248 and asparagine 302 each coordinate pyridoxal 5'-phosphate. Lysine 305 carries the post-translational modification N6-(pyridoxal phosphate)lysine.

This sequence belongs to the group II decarboxylase family. Pyridoxal 5'-phosphate serves as cofactor. Mostly expressed in bulbs, and, to a lower extent, in stems, roots, leaves and flowers.

It carries out the reaction L-tyrosine + H(+) = tyramine + CO2. It participates in alkaloid biosynthesis. Functionally, catalyzes the decarboxylation of L-tyrosine to tyramine, which is converted to norbelladine, a precursor to all Amaryllidaceae alkaloids such as galanthamine, lycorine and haemanthamine, and including haemanthamine- and crinamine-type alkaloids, promising anticancer agents. This chain is Tyrosine decarboxylase 2, found in Narcissus pseudonarcissus (Daffodil).